The primary structure comprises 1940 residues: Myosin-3 (1940 aa).

The region spanning D33 to P82 is the Myosin N-terminal SH3-like domain. In terms of domain architecture, Myosin motor spans D86 to D779. K130 is subject to N6,N6,N6-trimethyllysine. G179–T186 contributes to the ATP binding site. Actin-binding regions lie at residues L656–E678 and K758–G772. Residues L782 to S811 enclose the IQ domain. Residues L841–F1928 adopt a coiled-coil conformation. The tract at residues A1260–S1289 is disordered. Polar residues predominate over residues R1269 to Q1282.

Belongs to the TRAFAC class myosin-kinesin ATPase superfamily. Myosin family. Muscle myosin is a hexameric protein that consists of 2 heavy chain subunits (MHC), 2 alkali light chain subunits (MLC) and 2 regulatory light chain subunits (MLC-2).

It is found in the cytoplasm. It localises to the myofibril. Functionally, muscle contraction. The sequence is that of Myosin-3 (Myh3) from Mus musculus (Mouse).